Reading from the N-terminus, the 1050-residue chain is Beta-galactosidase (1050 aa).

Positions 110 and 209 each coordinate substrate. A Na(+)-binding site is contributed by D209. Mg(2+)-binding residues include E432, H434, and E477. Residues E477 and 553–556 (EYAH) contribute to the substrate site. The active-site Proton donor is the E477. The active-site Nucleophile is E553. Mg(2+) is bound at residue N613. Residues F617 and N620 each coordinate Na(+). The substrate site is built by N620 and W1023.

This sequence belongs to the glycosyl hydrolase 2 family. As to quaternary structure, homotetramer. Mg(2+) serves as cofactor. It depends on Na(+) as a cofactor.

It catalyses the reaction Hydrolysis of terminal non-reducing beta-D-galactose residues in beta-D-galactosides.. In Yersinia enterocolitica serotype O:8 / biotype 1B (strain NCTC 13174 / 8081), this protein is Beta-galactosidase.